A 457-amino-acid polypeptide reads, in one-letter code: Proton-translocating ferredoxin:NAD(+) oxidoreductase complex subunit C (457 aa).

4Fe-4S ferredoxin-type domains are found at residues 353–386 (TKNDVNDGKESSCIRCGRCLKACPMHLNPSMLSI) and 396–427 (AKEEYNLLDCVECGSCVYTCPAKRKIVQYIRY). Cysteine 365, cysteine 368, cysteine 371, cysteine 375, cysteine 405, cysteine 408, cysteine 411, and cysteine 415 together coordinate [4Fe-4S] cluster. The tract at residues 433 to 457 (RAAGEREKAKAAKAKEKKEKEEVLK) is disordered.

Belongs to the 4Fe4S bacterial-type ferredoxin family. RnfC subfamily. As to quaternary structure, the complex is composed of six subunits: RnfA, RnfB, RnfC, RnfD, RnfE and RnfG. The cofactor is [4Fe-4S] cluster.

It is found in the cell membrane. Functionally, part of a membrane-bound complex that couples electron transfer with translocation of ions across the membrane. Couples electron transfer from reduced ferredoxin to NAD(+) with translocation of H(+) out of the cell. Essential for energy conservation during autotrophic growth. Contributes to ATP synthesis during heterotrophic growth. This Clostridium ljungdahlii (strain ATCC 55383 / DSM 13528 / PETC) protein is Proton-translocating ferredoxin:NAD(+) oxidoreductase complex subunit C.